The sequence spans 144 residues: Large ribosomal subunit protein uL16 (144 aa).

This sequence belongs to the universal ribosomal protein uL16 family. As to quaternary structure, part of the 50S ribosomal subunit.

Binds 23S rRNA and is also seen to make contacts with the A and possibly P site tRNAs. The sequence is that of Large ribosomal subunit protein uL16 from Acidobacterium capsulatum (strain ATCC 51196 / DSM 11244 / BCRC 80197 / JCM 7670 / NBRC 15755 / NCIMB 13165 / 161).